Reading from the N-terminus, the 193-residue chain is Achaete-scute homolog 2 (193 aa).

Disordered regions lie at residues Met1 to Arg58 and Pro128 to Ser177. The bHLH domain maps to Ala50 to Leu102. The segment covering Pro128 to Arg152 has biased composition (low complexity).

In terms of assembly, efficient DNA binding requires dimerization with another basic helix-loop-helix (bHLH) protein. Forms heterodimers with bHLH transcription factor TCF3. May not heterodimerise with bHLH protein HAND1. As to expression, expressed in placenta.

It is found in the nucleus. Transcription factor. Binds to E-box motifs 5'-CANNTG-3' in the regulatory elements of target genes, probably as a heterodimer with another basic helix-loop-helix (bHLH) protein such as the transcription factor TCF3. May bind both open and closed chromatin, acting as a pioneer transcription factor to allow other factors to bind and activate lineage-specific genes. Required during post-implantation development for the generation of some differentiated trophoblast cell types. Transcriptional activity of ASCL2 may be antagonised in a subset of trophoblast cells by bHLH transcription factor HAND1, perhaps by competing for dimerization with other bHLH proteins. Involved in differentiation and function of follicular T-helper (Tfh) cells, thereby playing a role in germinal center responses; probably modulates expression of genes involved in Tfh cell function, such as BCL6. May also act as a suppressor of Th1-, Th2- and Th17-cell differentiation. Induces the formation of stem cells in intestinal crypts in vitro, synergistically activating transcription of target genes, such as SOX9, together with TCF4/beta-catenin. May form a bistable transcriptional switch, controlling expression of its own gene together with Wnt/R-spondin signaling, and thereby maintaining stem cell characteristics. Modulates expression of target genes, including perhaps down-regulating EGR1/Krox24 and chemokine CXCL10/Mob-1 and up-regulating CXCR4 and CDKN1C/p57kip2, in Schwann cells. May play a role in reducing proliferation of Schwann cells, perhaps acting via modulation of expression of CDKN1C. May be dispensable for blastocyst formation and later embryonic function. May be involved in the determination of neuronal precursors. The polypeptide is Achaete-scute homolog 2 (ASCL2) (Bos taurus (Bovine)).